The sequence spans 269 residues: Eukaryotic translation initiation factor 3 subunit G-1 (269 aa).

The region spanning 188-266 (AAIRISNLSE…LILSVEWSKP (79 aa)) is the RRM domain.

It belongs to the eIF-3 subunit G family. Component of the eukaryotic translation initiation factor 3 (eIF-3) complex. The eIF-3 complex interacts with pix.

It is found in the cytoplasm. In terms of biological role, RNA-binding component of the eukaryotic translation initiation factor 3 (eIF-3) complex, which is involved in protein synthesis of a specialized repertoire of mRNAs and, together with other initiation factors, stimulates binding of mRNA and methionyl-tRNAi to the 40S ribosome. The eIF-3 complex specifically targets and initiates translation of a subset of mRNAs involved in cell proliferation. This subunit can bind 18S rRNA. This Drosophila erecta (Fruit fly) protein is Eukaryotic translation initiation factor 3 subunit G-1.